The primary structure comprises 519 residues: Cytochrome P450 52-E3 (519 aa).

A helical transmembrane segment spans residues 10–30 (VLGGISVSFLLAYQAIYFYFI). A heme-binding site is contributed by Cys-461.

It belongs to the cytochrome P450 family. The cofactor is heme.

The protein localises to the membrane. It carries out the reaction an omega-methyl-long-chain fatty acid + reduced [NADPH--hemoprotein reductase] + O2 = an omega-hydroxy-long-chain fatty acid + oxidized [NADPH--hemoprotein reductase] + H2O + H(+). It catalyses the reaction (9Z)-octadecenoate + reduced [NADPH--hemoprotein reductase] + O2 = 18-hydroxy-(9Z)-octadecenoate + oxidized [NADPH--hemoprotein reductase] + H2O + H(+). The catalysed reaction is hexadecanoate + reduced [NADPH--hemoprotein reductase] + O2 = 16-hydroxyhexadecanoate + oxidized [NADPH--hemoprotein reductase] + H2O + H(+). The enzyme catalyses (9Z)-hexadecenoate + reduced [NADPH--hemoprotein reductase] + O2 = (9Z)-16-hydroxyhexadec-9-enoate + oxidized [NADPH--hemoprotein reductase] + H2O + H(+). In terms of biological role, catalyzes the terminal (at the omega-position) hydroxylation of a fatty acid. Probably involved in alkane metabolism. Has minor activity toward myristic acid, palmitic acid, palmitoleic acid and oleic acid. The protein is Cytochrome P450 52-E3 of Starmerella bombicola (Yeast).